Here is a 199-residue protein sequence, read N- to C-terminus: Octanoyltransferase (199 aa).

Residues 27–199 form the BPL/LPL catalytic domain; it reads SNSCDELWLL…FVQYFLTQFK (173 aa). Residues 66-73, 133-135, and 146-148 each bind substrate; these read RGGQVTYH, SIG, and GIA. Catalysis depends on C164, which acts as the Acyl-thioester intermediate.

It belongs to the LipB family.

It is found in the cytoplasm. It carries out the reaction octanoyl-[ACP] + L-lysyl-[protein] = N(6)-octanoyl-L-lysyl-[protein] + holo-[ACP] + H(+). It functions in the pathway protein modification; protein lipoylation via endogenous pathway; protein N(6)-(lipoyl)lysine from octanoyl-[acyl-carrier-protein]: step 1/2. In terms of biological role, catalyzes the transfer of endogenously produced octanoic acid from octanoyl-acyl-carrier-protein onto the lipoyl domains of lipoate-dependent enzymes. Lipoyl-ACP can also act as a substrate although octanoyl-ACP is likely to be the physiological substrate. In Legionella pneumophila (strain Paris), this protein is Octanoyltransferase.